Reading from the N-terminus, the 162-residue chain is MGLETEKADVQLFMDDDSYSHHSGLEYADPEKFADSGQDRDPHRLNSHLKLGFEDVIAEPVTTHSFDKVWICSHALFEISKYVMYKFLTVFLAIPLAFIAGILFATLSCLHIWILMPFVKTCLMVLPSVQTIWKSVTDVIIAPLCTSVGRCFSSVSLQLSQD.

Residues methionine 1 to lysine 86 lie on the Cytoplasmic side of the membrane. The residue at position 19 (tyrosine 19) is a Phosphotyrosine; by SRC. Phosphoserine is present on residues serine 20 and serine 23. Tyrosine 27 is subject to Phosphotyrosine; by SRC. Serine 36 bears the Phosphoserine mark. Residues phenylalanine 87–leucine 107 constitute an intramembrane region (helical). At serine 108–aspartate 162 the chain is on the cytoplasmic side.

Belongs to the caveolin family. In terms of assembly, monomer or homodimer. Interacts with CAV1; the interaction forms a stable heterooligomeric complex that is required for targeting to lipid rafts and for caveolae formation. Tyrosine phosphorylated forms do not form heterooligomers with the Tyr-19-phosphorylated form existing as a monomer or dimer, and the Tyr-27-form as a monomer only. Interacts (tyrosine phosphorylated form) with the SH2 domain-containing proteins, RASA1, NCK1 and SRC. Interacts (tyrosine phosphorylated form) with INSR, the interaction (Tyr-27-phosphorylated form) is increased on insulin stimulation. Interacts (Tyr-19 phosphorylated form) with MAPK1 (phosphorylated form); the interaction, promoted by insulin, leads to nuclear location and MAPK1 activation. Interacts with STAT3; the interaction is increased on insulin-induced tyrosine phosphorylation leading to STAT activation. Phosphorylated on serine and tyrosine residues. CAV1 promotes phosphorylation on Ser-23 which then targets the complex to the plasma membrane, lipid rafts and caveolae. Phosphorylation on Ser-36 appears to modulate mitosis in endothelial cells. Phosphorylation on both Tyr-19 and Tyr-27 is required for insulin-induced 'Ser-727' phosphorylation of STAT3 and its activation. Phosphorylation on Tyr-19 is required for insulin-induced phosphorylation of MAPK1 and DNA binding of STAT3. Tyrosine phosphorylation is induced by both EGF and insulin (By. similarity).

The protein resides in the nucleus. Its subcellular location is the cytoplasm. The protein localises to the golgi apparatus membrane. It is found in the cell membrane. It localises to the membrane. The protein resides in the caveola. Functionally, may act as a scaffolding protein within caveolar membranes. Interacts directly with G-protein alpha subunits and can functionally regulate their activity. Acts as an accessory protein in conjunction with CAV1 in targeting to lipid rafts and driving caveolae formation. The Ser-36 phosphorylated form has a role in modulating mitosis in endothelial cells. Positive regulator of cellular mitogenesis of the MAPK signaling pathway. Required for the insulin-stimulated nuclear translocation and activation of MAPK1 and STAT3, and the subsequent regulation of cell cycle progression. In Gorilla gorilla gorilla (Western lowland gorilla), this protein is Caveolin-2 (CAV2).